The sequence spans 718 residues: K(+)-insensitive pyrophosphate-energized proton pump (718 aa).

6 consecutive transmembrane segments (helical) span residues 6–26 (AVLV…IWAI), 54–76 (LTRQ…WYLL), 81–103 (AIGF…HVSV), 112–132 (AASL…AITG), 133–153 (LLVA…LTVW), and 168–188 (VSLG…GGIF). K190 serves as a coordination point for substrate. Mg(2+)-binding residues include D193, D197, N220, and D223. 6 helical membrane-spanning segments follow: residues 240 to 260 (AVTV…SDIL), 265 to 285 (LYPL…TFFV), 300 to 320 (GLIA…TLTV), 335 to 355 (GTNL…IVVI), 385 to 405 (GLAV…GGII), and 413 to 433 (LFGT…IVAL). Position 441 (D441) interacts with Mg(2+). 4 helical membrane-spanning segments follow: residues 472-492 (AVTK…LFAA), 524-544 (YVVA…GMAM), 593-613 (IIPS…VLLI), and 620-640 (AFAA…FVAI). Residues D650, D682, and D686 each contribute to the Ca(2+) site. A substrate-binding site is contributed by K689. Residues 695–715 (AVNPAIKITNIVALLLLAVLA) form a helical membrane-spanning segment.

Belongs to the H(+)-translocating pyrophosphatase (TC 3.A.10) family. K(+)-insensitive subfamily. Homodimer. The cofactor is Mg(2+).

The protein localises to the cell inner membrane. It carries out the reaction diphosphate + H2O + H(+)(in) = 2 phosphate + 2 H(+)(out). Functionally, proton pump that utilizes the energy of pyrophosphate hydrolysis as the driving force for proton movement across the membrane. Generates a proton motive force. This Brucella anthropi (strain ATCC 49188 / DSM 6882 / CCUG 24695 / JCM 21032 / LMG 3331 / NBRC 15819 / NCTC 12168 / Alc 37) (Ochrobactrum anthropi) protein is K(+)-insensitive pyrophosphate-energized proton pump.